The following is a 712-amino-acid chain: Sterol uptake control protein 2 (712 aa).

The segment covering 1–19 (MMMTVKQESPNSTLNTSEF) has biased composition (polar residues). The segment at 1 to 52 (MMMTVKQESPNSTLNTSEFSSDENLKTNNSEPPKKVSKSSTGKRKYHQKSRN) is disordered. The span at 35–50 (KVSKSSTGKRKYHQKS) shows a compositional bias: basic residues. The zn(2)-C6 fungal-type DNA-binding region spans 54–81 (CSTCKKRRVKCDEQRPVCGNCTKLKLDC). Disordered regions lie at residues 95 to 150 (KKDI…VIPP) and 236 to 342 (TTVP…ANPL). Composition is skewed to polar residues over residues 113–143 (STVS…QDIK), 252–306 (RKSQ…SGSP), and 326–337 (KSLPNISPNMSI).

The protein resides in the nucleus. Transcription factor involved in the regulation of ergosterol biosynthetic genes such as ERG2 and ERG11 through direct binding to sterol response elements (SREs) in the promoters. Also binds to its own promoter on 2 cis-acting elements to promote autoregulation. Regulates sterol uptake across the plasma membrane. Acts as a major regulator of ascorbic acid-induced response. Plays a role in the triggering of pyroptosis, an inflammasome-mediated programmed cell death pathway in macrophages, allowing macrophages escaping. This is Sterol uptake control protein 2 from Candida albicans (strain SC5314 / ATCC MYA-2876) (Yeast).